A 487-amino-acid polypeptide reads, in one-letter code: MSLSVCTSALSRRSSSQNGAAGRPWGASASSVAGGYGGSASGFGVGCGGLFSAASMFGSSSGFSGGSAGCLPGLGSAYGGPLRGGAGGMGIGMGIAGSSGGGSLCIFSGNDGGLLSGSEKETMQNLNDRLASYLGKVRSLEEANAELENKIREWYETRRTRDAGSQSDYSKYYPLIEDLKNKIVSARVSNAQLLLQIDNARLAAEDFRMKYENELALRQTVEADINGLRRVLDELTLTRADLEAQLETLTEELAYMKKNHEEELQSFQAGGPGEVNVEMDAAPGVDLTKVLNEMRAQYEAMAEQNRKDAEAWFLEKSGELRKEISSNTEQLQSSKSEVTDLKRMVQNLEIELQSQLAMKSSLEGSLAETEGGYCCQLSQVQQLIGSLEEQLQQVRADAERQNADHQRLLGVKARLEMEIETYRRLLEGDSQGDGFDESSSLSVSKPQTPSVDSSKDPNKTRKIKTVVQEIVNGEVVSSQVQELEEEM.

Residues 1–118 (MSLSVCTSAL…GNDGGLLSGS (118 aa)) form a head region. Residues 119-154 (EKETMQNLNDRLASYLGKVRSLEEANAELENKIREW) form a coil 1A region. An IF rod domain is found at 119–433 (EKETMQNLND…RLLEGDSQGD (315 aa)). The segment at 158–175 (RRTRDAGSQSDYSKYYPL) is linker 1. The interval 176 to 267 (IEDLKNKIVS…KNHEEELQSF (92 aa)) is coil 1B. Residues 268-290 (QAGGPGEVNVEMDAAPGVDLTKV) form a linker 12 region. The coil 2 stretch occupies residues 291 to 428 (LNEMRAQYEA…IETYRRLLEG (138 aa)). A disordered region spans residues 428-461 (GDSQGDGFDESSSLSVSKPQTPSVDSSKDPNKTR). Positions 429 to 487 (DSQGDGFDESSSLSVSKPQTPSVDSSKDPNKTRKIKTVVQEIVNGEVVSSQVQELEEEM) are tail. The span at 437-452 (ESSSLSVSKPQTPSVD) shows a compositional bias: polar residues.

This sequence belongs to the intermediate filament family. Heterotetramer of two type I and two type II keratins. Keratin-3 associates with keratin-12. As to expression, expressed in the corneal epithelium (at protein level). Also expressed in the suprabasal limbal epithelium of the cornea (at protein level).

Involved in corneal epithelium organization, integrity and corneal keratin expression. This is Keratin, type I cytoskeletal 12 (Krt12) from Mus musculus (Mouse).